We begin with the raw amino-acid sequence, 318 residues long: DNA-directed RNA polymerase subunit alpha 2 (318 aa).

The segment at 1-227 is alpha N-terminal domain (alpha-NTD); sequence MALENLLHPT…NQLRNIVDIE (227 aa). The interval 242 to 318 is alpha C-terminal domain (alpha-CTD); it reads INPILLKHVE…TLIENWPQDL (77 aa).

Belongs to the RNA polymerase alpha chain family. In terms of assembly, homodimer. The RNAP catalytic core consists of 2 alpha, 1 beta, 1 beta' and 1 omega subunit. When a sigma factor is associated with the core the holoenzyme is formed, which can initiate transcription.

It carries out the reaction RNA(n) + a ribonucleoside 5'-triphosphate = RNA(n+1) + diphosphate. DNA-dependent RNA polymerase catalyzes the transcription of DNA into RNA using the four ribonucleoside triphosphates as substrates. The sequence is that of DNA-directed RNA polymerase subunit alpha 2 from Francisella tularensis subsp. novicida (strain U112).